We begin with the raw amino-acid sequence, 381 residues long: Sulfate/thiosulfate import ATP-binding protein CysA (381 aa).

Residues 3 to 233 (ILVYEVSKSL…PIDYFVGIFS (231 aa)) enclose the ABC transporter domain. Position 35–42 (35–42 (GPSGSGKS)) interacts with ATP.

This sequence belongs to the ABC transporter superfamily. Sulfate/tungstate importer (TC 3.A.1.6) family.

Its subcellular location is the plastid. The protein localises to the chloroplast. The catalysed reaction is sulfate(out) + ATP + H2O = sulfate(in) + ADP + phosphate + H(+). It carries out the reaction thiosulfate(out) + ATP + H2O = thiosulfate(in) + ADP + phosphate + H(+). Its function is as follows. Part of the ABC transporter complex involved in sulfate/thiosulfate import. Responsible for energy coupling to the transport system. This is Sulfate/thiosulfate import ATP-binding protein CysA from Anthoceros angustus (Hornwort).